Reading from the N-terminus, the 184-residue chain is Structural protein V8 (184 aa).

Positions 14–35 (IYNKSNTLTNTPSNPTGNTNTL) are disordered.

This sequence belongs to the sputnik virus V6 family.

It is found in the virion. This Sputnik virophage protein is Structural protein V8.